A 184-amino-acid chain; its full sequence is Photosystem I assembly protein Ycf4 (184 aa).

2 helical membrane passes run 21 to 43 and 58 to 78; these read NFFW…ISSY and LFVP…FISS.

The protein belongs to the Ycf4 family.

It localises to the plastid. Its subcellular location is the chloroplast thylakoid membrane. Functionally, seems to be required for the assembly of the photosystem I complex. The polypeptide is Photosystem I assembly protein Ycf4 (Pinus thunbergii (Japanese black pine)).